The primary structure comprises 346 residues: Partitioning defective 6 homolog alpha (346 aa).

Residues 1–116 (MARPQRTPAR…SNSLQRRKKG (116 aa)) are interaction with PRKCI and PRKCZ. Residues 15-95 (IVEVKSKFDA…PPLRLLVQKR (81 aa)) enclose the PB1 domain. The tract at residues 126 to 253 (RTRPPLLISL…VTVKPANQRN (128 aa)) is interaction with PARD3 and CDC42. The 18-residue stretch at 133-150 (ISLPQDFRQVSSVIDVDL) folds into the Pseudo-CRIB domain. The PDZ domain occupies 157–250 (RVRLHKHGSD…NLIVTVKPAN (94 aa)). Residues 257 to 346 (RGASGRLTGP…IRGDGSGFSL (90 aa)) form a disordered region. A phosphoserine mark is found at serine 278 and serine 345.

The protein belongs to the PAR6 family. As to quaternary structure, interacts with MAP2K5. Interacts with PARD3. Interacts with GTP-bound forms of CDC42, RHOQ/TC10 and RAC1. Interacts with the N-terminal part of PRKCI and PRKCZ. Part of a complex with PARD3, CDC42 or RAC1 and PRKCI or PRKCZ. Part of a complex with LLGL1 and PRKCI. Interacts with human T-cell leukemia virus type I TAX protein. Interacts with PALS1 and CRB3. Interacts with TGFBR1; involved in TGF-beta induced epithelial to mesenchymal transition. Interacts with ECT2 ('Thr-359' phosphorylated form) and PRKCI. Interacts with DCTN1 and PCM1. Phosphorylated by the TGF-beta receptor. In terms of processing, ubiquitinated by the SCF(FBXO31) complex, leading to its proteasomal degradation. Expressed in pancreas, skeletal muscle, brain and heart. Weakly expressed in kidney and placenta.

It localises to the cytoplasm. The protein localises to the cell membrane. The protein resides in the cell projection. Its subcellular location is the ruffle. It is found in the cell junction. It localises to the tight junction. The protein localises to the cytoskeleton. The protein resides in the microtubule organizing center. Its subcellular location is the centrosome. It is found in the centriolar satellite. Its function is as follows. Adapter protein involved in asymmetrical cell division and cell polarization processes. Probably involved in the formation of epithelial tight junctions. Association with PARD3 may prevent the interaction of PARD3 with F11R/JAM1, thereby preventing tight junction assembly. The PARD6-PARD3 complex links GTP-bound Rho small GTPases to atypical protein kinase C proteins. Regulates centrosome organization and function. Essential for the centrosomal recruitment of key proteins that control centrosomal microtubule organization. The polypeptide is Partitioning defective 6 homolog alpha (PARD6A) (Homo sapiens (Human)).